A 482-amino-acid chain; its full sequence is Probable 2-carboxy-D-arabinitol-1-phosphatase (482 aa).

A chloroplast-targeting transit peptide spans 1–34 (MISLPLTTPILPSRCLLHKTRRQNSTRRRLLIRS). His-55 (tele-phosphohistidine intermediate) is an active-site residue. Glu-129 (proton donor/acceptor) is an active-site residue.

Belongs to the phosphoglycerate mutase family.

The protein localises to the plastid. Its subcellular location is the chloroplast stroma. The catalysed reaction is 2-carboxy-D-arabinitol 1-phosphate + H2O = 2-carboxy-D-arabinitol + phosphate. Functionally, phosphoglycerate mutase-like protein lacking PGM activity, but having 2-carboxy-D-arabinitol 1-phosphate (CA1P) phosphatase activity. Prevents the accumulation of D-glycero-2,3-pentodiulose-1,5-bisphosphate (PDBP) a potent inhibitor of ribulose-1,5-bisphosphate carboxylase (RuBisCO). PDBP is produced during the oxidation of ribulose-1,5-bisphosphate, the substrate of RuBisCO. This Arabidopsis thaliana (Mouse-ear cress) protein is Probable 2-carboxy-D-arabinitol-1-phosphatase.